The primary structure comprises 336 residues: Phenylalanine--tRNA ligase alpha subunit (336 aa).

Glu-251 provides a ligand contact to Mg(2+).

The protein belongs to the class-II aminoacyl-tRNA synthetase family. Phe-tRNA synthetase alpha subunit type 1 subfamily. Tetramer of two alpha and two beta subunits. Requires Mg(2+) as cofactor.

It is found in the cytoplasm. The catalysed reaction is tRNA(Phe) + L-phenylalanine + ATP = L-phenylalanyl-tRNA(Phe) + AMP + diphosphate + H(+). In Syntrophobacter fumaroxidans (strain DSM 10017 / MPOB), this protein is Phenylalanine--tRNA ligase alpha subunit.